The primary structure comprises 344 residues: S-adenosylmethionine:tRNA ribosyltransferase-isomerase (344 aa).

The protein belongs to the QueA family. Monomer.

Its subcellular location is the cytoplasm. It carries out the reaction 7-aminomethyl-7-carbaguanosine(34) in tRNA + S-adenosyl-L-methionine = epoxyqueuosine(34) in tRNA + adenine + L-methionine + 2 H(+). The protein operates within tRNA modification; tRNA-queuosine biosynthesis. Its function is as follows. Transfers and isomerizes the ribose moiety from AdoMet to the 7-aminomethyl group of 7-deazaguanine (preQ1-tRNA) to give epoxyqueuosine (oQ-tRNA). The chain is S-adenosylmethionine:tRNA ribosyltransferase-isomerase from Pediococcus pentosaceus (strain ATCC 25745 / CCUG 21536 / LMG 10740 / 183-1w).